A 574-amino-acid polypeptide reads, in one-letter code: Developmental and secondary metabolism regulator veA (574 aa).

Disordered stretches follow at residues 1–22 (MATRAPLAPPPNETEASVSRIT), 39–60 (ERARACGAGAKSSADRRPVDPP), 255–500 (RSSD…GAGK), and 513–540 (RSYEDSFGHDDRPLYNGMRPDTESYPRR). The Velvet domain maps to 25–230 (GKKLTYKLNV…AEQGCRVRIR (206 aa)). A Nuclear localization signal motif is present at residues 39 to 44 (ERARAC). 2 stretches are compositionally biased toward pro residues: residues 314 to 323 (RPLPPAPGPA) and 330 to 341 (PAPPAPPAPPSH). Composition is skewed to polar residues over residues 343-353 (PGYQSHLSFGS), 385-394 (HARNPSTSAE), 406-415 (RMSTERSSYP), and 448-458 (VAQSAAPRSQT). Positions 457–501 (QTPSSSLVPSLPPLKALSGDYPNNLSQSSSSTSQSPSHDLGAGKK) are PEST. Composition is skewed to low complexity over residues 459-474 (PSSSLVPSLPPLKALS) and 482-493 (SQSSSSTSQSPS). The span at 513–525 (RSYEDSFGHDDRP) shows a compositional bias: basic and acidic residues.

The protein belongs to the velvet family. VeA subfamily. In terms of assembly, component of the heterotrimeric velvet complex composed of laeA, veA and velB; VeA acting as a bridging protein between laeA and velB.

It is found in the nucleus. It localises to the cytoplasm. Functionally, component of the velvet transcription factor complex that controls sexual/asexual developmental ratio in response to light, promoting sexual development in the darkness while stimulating asexual sporulation under illumination. The velvet complex hat acts as a global regulator for secondary metabolite gene expression. Controls the expression of the penicillin gene cluster. This Aspergillus oryzae (strain ATCC 42149 / RIB 40) (Yellow koji mold) protein is Developmental and secondary metabolism regulator veA.